The primary structure comprises 312 residues: MNAGIIGLGRYIPEKVLTNLDLEKMVETSDEWIRTRTGIEERRIASDDVNTSHMALAAAKKALADADVAAEDIDMILVATVTPDQAFPTVACMIQEQLGAHKACAMDISAACAGFMYGLVTGKQFIESGTFKHVLVVGVEKLSRITDWDDRNTAVLFGDGAGAAVLGEVSEGKGILSFELGADGRGGKHLYLDEKDHTIMNGREVFKFAVRQMGESSVNVIEKAGLSKEDVDFLIPHQANIRIMEAARERLELPVEKMSKTVHKYGNTSAASIPISLCEEIEAGKIHDGDVIVMVGFGGGLTWGAIAMRWGR.

Active-site residues include Cys-112 and His-237. The segment at 238-242 (QANIR) is ACP-binding. Asn-267 is a catalytic residue.

Belongs to the thiolase-like superfamily. FabH family. Homodimer.

The protein resides in the cytoplasm. The enzyme catalyses malonyl-[ACP] + acetyl-CoA + H(+) = 3-oxobutanoyl-[ACP] + CO2 + CoA. It participates in lipid metabolism; fatty acid biosynthesis. Functionally, catalyzes the condensation reaction of fatty acid synthesis by the addition to an acyl acceptor of two carbons from malonyl-ACP. Catalyzes the first condensation reaction which initiates fatty acid synthesis and may therefore play a role in governing the total rate of fatty acid production. Possesses both acetoacetyl-ACP synthase and acetyl transacylase activities. Its substrate specificity determines the biosynthesis of branched-chain and/or straight-chain of fatty acids. The protein is Beta-ketoacyl-[acyl-carrier-protein] synthase III of Bacillus pumilus (strain SAFR-032).